Here is a 508-residue protein sequence, read N- to C-terminus: Lysine-specific permease LysP (508 aa).

12 helical membrane passes run 43–63 (SMIALGGTIGTGLFLTSGDVI), 66–86 (AGPFGALTAYVLIGAMVYFLM), 112–132 (PAFGFALGWNYWLNWAITVAV), 144–164 (WLPDVPSWIFSLIALIIVFSI), 184–204 (ITVVVLFLIIGFLSIFGIMGG), 219–239 (FVGGLGSFTTGGGILGVLLVA), 270–290 (IFWRILVFYILSIFVMAAIIP), 314–334 (VGFSIAASIMNAVVLTSVVSA), 367–387 (IPFIALLATTAVALLTFLTSI), 393–413 (FTLLVSASGLTGFIAWIGIAI), 436–456 (AKLFPFGPILALIMTVLVTLG), and 467–487 (WVQGVVMYAAIPLFFILYLGY).

This sequence belongs to the amino acid-polyamine-organocation (APC) superfamily. Amino acid transporter (AAT) (TC 2.A.3.1) family.

Its subcellular location is the cell membrane. It carries out the reaction L-lysine(out) + H(+)(out) = L-lysine(in) + H(+)(in). Permease involved in lysine uptake. This Lactococcus lactis subsp. cremoris (strain MG1363) protein is Lysine-specific permease LysP.